We begin with the raw amino-acid sequence, 398 residues long: ATP-dependent RNA helicase eIF4A (398 aa).

Residues 25 to 53 (DSFDTMNLKPELLRGVYAYGFERPSAIQQ) carry the Q motif motif. The Helicase ATP-binding domain maps to 56–226 (IMPVIKGHDV…TKFMRDPVRI (171 aa)). 69 to 76 (AQSGTGKT) serves as a coordination point for ATP. The DEAD box signature appears at 174–177 (DEAD). Residues 237-398 (GIKQFYIAVE…EMPMNVADLI (162 aa)) enclose the Helicase C-terminal domain.

This sequence belongs to the DEAD box helicase family. eIF4A subfamily. As to quaternary structure, component of the eIF4F complex, which composition varies with external and internal environmental conditions. It is composed of at least eIF4A, eIF4E and eIF4G.

The protein resides in the cytoplasm. The enzyme catalyses ATP + H2O = ADP + phosphate + H(+). Its function is as follows. ATP-dependent RNA helicase which is a subunit of the eIF4F complex involved in cap recognition and is required for mRNA binding to ribosome. In the current model of translation initiation, eIF4A unwinds RNA secondary structures in the 5'-UTR of mRNAs which is necessary to allow efficient binding of the small ribosomal subunit, and subsequent scanning for the initiator codon. This chain is ATP-dependent RNA helicase eIF4A (tif1), found in Botryotinia fuckeliana (strain B05.10) (Noble rot fungus).